The chain runs to 233 residues: DNA repair protein RecO (233 aa).

It belongs to the RecO family.

In terms of biological role, involved in DNA repair and RecF pathway recombination. The sequence is that of DNA repair protein RecO from Pseudomonas aeruginosa (strain UCBPP-PA14).